We begin with the raw amino-acid sequence, 555 residues long: Zinc finger and SCAN domain-containing protein 21 (555 aa).

4 disordered regions span residues 1 to 74 (MTKV…SKDK), 102 to 133 (TIKA…YHDT), 204 to 243 (LDEP…TQHV), and 263 to 354 (EEVF…RPAP). 3 tandem repeats follow at residues 18-56 (ESMG…QDTL), 57-95 (EPMG…QDTL), and 96-134 (EQLG…HDTP). The interval 18-134 (ESMGPSPIKV…FRQFGYHDTP (117 aa)) is 3 X 39 AA approximate tandem repeats. Residue Lys-26 forms a Glycyl lysine isopeptide (Lys-Gly) (interchain with G-Cter in SUMO2) linkage. The 83-residue stretch at 122–204 (RQRFRQFGYH…TLLEDLEQEL (83 aa)) folds into the SCAN box domain. Residues 210–240 (QVSSPPNEQKQSWEKMSTSGTAMESLSSTET) show a composition bias toward polar residues. Positions 280–302 (PQKEDSADEHRSSEEESHADGLK) are enriched in basic and acidic residues. Glycyl lysine isopeptide (Lys-Gly) (interchain with G-Cter in SUMO2) cross-links involve residues Lys-302 and Lys-313. Residues 316 to 332 (SRSERQWANNLERERGT) show a composition bias toward basic and acidic residues. 7 consecutive C2H2-type zinc fingers follow at residues 359–381 (YICA…RRTH), 387–409 (YVCT…YRTH), 415–436 (YDCK…QRMH), 442–464 (YQCK…YRIH), 470–492 (YQCN…QRLH), 498–520 (YKCK…HRIH), and 526–548 (YWCS…QRVH). A Glycyl lysine isopeptide (Lys-Gly) (interchain with G-Cter in SUMO2) cross-link involves residue Lys-431.

It belongs to the krueppel C2H2-type zinc-finger protein family. As to expression, expressed predominantly in the spermatocytes and spermatids of adult testes. It is also present at lower levels in the ovary, brain, spleen, embryo and fetus.

The protein localises to the nucleus. Strong transcriptional activator. Plays an important role in spermatogenesis; essential for the progression of meiotic prophase I in spermatocytes. The polypeptide is Zinc finger and SCAN domain-containing protein 21 (Zscan21) (Mus musculus (Mouse)).